Here is a 92-residue protein sequence, read N- to C-terminus: DNA-directed RNA polymerase subunit omega (92 aa).

It belongs to the RNA polymerase subunit omega family. The RNAP catalytic core consists of 2 alpha, 1 beta, 1 beta' and 1 omega subunit. When a sigma factor is associated with the core the holoenzyme is formed, which can initiate transcription.

It carries out the reaction RNA(n) + a ribonucleoside 5'-triphosphate = RNA(n+1) + diphosphate. Functionally, promotes RNA polymerase assembly. Latches the N- and C-terminal regions of the beta' subunit thereby facilitating its interaction with the beta and alpha subunits. This is DNA-directed RNA polymerase subunit omega from Shewanella baltica (strain OS223).